The sequence spans 319 residues: Acetyl-coenzyme A carboxylase carboxyl transferase subunit alpha (319 aa).

Residues 32-293 (NVDAEVRALR…KAVLLNELDA (262 aa)) form the CoA carboxyltransferase C-terminal domain.

Belongs to the AccA family. As to quaternary structure, acetyl-CoA carboxylase is a heterohexamer composed of biotin carboxyl carrier protein (AccB), biotin carboxylase (AccC) and two subunits each of ACCase subunit alpha (AccA) and ACCase subunit beta (AccD).

The protein resides in the cytoplasm. The enzyme catalyses N(6)-carboxybiotinyl-L-lysyl-[protein] + acetyl-CoA = N(6)-biotinyl-L-lysyl-[protein] + malonyl-CoA. The protein operates within lipid metabolism; malonyl-CoA biosynthesis; malonyl-CoA from acetyl-CoA: step 1/1. Its function is as follows. Component of the acetyl coenzyme A carboxylase (ACC) complex. First, biotin carboxylase catalyzes the carboxylation of biotin on its carrier protein (BCCP) and then the CO(2) group is transferred by the carboxyltransferase to acetyl-CoA to form malonyl-CoA. This chain is Acetyl-coenzyme A carboxylase carboxyl transferase subunit alpha, found in Xanthomonas campestris pv. campestris (strain B100).